The following is a 317-amino-acid chain: 4-hydroxy-3-methylbut-2-enyl diphosphate reductase (317 aa).

A [4Fe-4S] cluster-binding site is contributed by Cys12. (2E)-4-hydroxy-3-methylbut-2-enyl diphosphate contacts are provided by His41 and His74. Dimethylallyl diphosphate-binding residues include His41 and His74. Isopentenyl diphosphate is bound by residues His41 and His74. Cys97 lines the [4Fe-4S] cluster pocket. His125 lines the (2E)-4-hydroxy-3-methylbut-2-enyl diphosphate pocket. Dimethylallyl diphosphate is bound at residue His125. His125 contacts isopentenyl diphosphate. Glu127 acts as the Proton donor in catalysis. (2E)-4-hydroxy-3-methylbut-2-enyl diphosphate is bound at residue Thr168. Residue Cys198 coordinates [4Fe-4S] cluster. Residues Ser226, Ser227, Asn228, and Ser270 each contribute to the (2E)-4-hydroxy-3-methylbut-2-enyl diphosphate site. Dimethylallyl diphosphate is bound by residues Ser226, Ser227, Asn228, and Ser270. Isopentenyl diphosphate is bound by residues Ser226, Ser227, Asn228, and Ser270.

It belongs to the IspH family. Homodimer. Requires [4Fe-4S] cluster as cofactor.

The enzyme catalyses isopentenyl diphosphate + 2 oxidized [2Fe-2S]-[ferredoxin] + H2O = (2E)-4-hydroxy-3-methylbut-2-enyl diphosphate + 2 reduced [2Fe-2S]-[ferredoxin] + 2 H(+). The catalysed reaction is dimethylallyl diphosphate + 2 oxidized [2Fe-2S]-[ferredoxin] + H2O = (2E)-4-hydroxy-3-methylbut-2-enyl diphosphate + 2 reduced [2Fe-2S]-[ferredoxin] + 2 H(+). It functions in the pathway isoprenoid biosynthesis; dimethylallyl diphosphate biosynthesis; dimethylallyl diphosphate from (2E)-4-hydroxy-3-methylbutenyl diphosphate: step 1/1. The protein operates within isoprenoid biosynthesis; isopentenyl diphosphate biosynthesis via DXP pathway; isopentenyl diphosphate from 1-deoxy-D-xylulose 5-phosphate: step 6/6. Catalyzes the conversion of 1-hydroxy-2-methyl-2-(E)-butenyl 4-diphosphate (HMBPP) into a mixture of isopentenyl diphosphate (IPP) and dimethylallyl diphosphate (DMAPP). Acts in the terminal step of the DOXP/MEP pathway for isoprenoid precursor biosynthesis. The polypeptide is 4-hydroxy-3-methylbut-2-enyl diphosphate reductase (Serratia proteamaculans (strain 568)).